A 496-amino-acid polypeptide reads, in one-letter code: Galactokinase (496 aa).

Ala-2 is subject to N-acetylalanine. Alpha-D-galactose contacts are provided by Arg-56, Glu-62, His-63, and Asp-65. ATP contacts are provided by Gly-161, Gly-163, Ser-165, and Ser-166. Asp-210 is an alpha-D-galactose binding site. The Proton acceptor role is filled by Asp-210. 3 residues coordinate ATP: Ser-252, Gln-253, and Lys-254. Position 262 (Tyr-262) interacts with alpha-D-galactose.

The protein belongs to the GHMP kinase family. GalK subfamily. Requires Mg(2+) as cofactor. It depends on Mn(2+) as a cofactor. The cofactor is Ca(2+). As to expression, expressed in roots, stems, leaves, flowers and young siliques. Higher expression in the elongating middle stem region than in the lower or upper stem region.

It carries out the reaction alpha-D-galactose + ATP = alpha-D-galactose 1-phosphate + ADP + H(+). The protein operates within carbohydrate metabolism; galactose metabolism. Its function is as follows. Sugar-1-kinase with a very high substrate specificity for the alpha-anomeric configuration of D-galacose (D-Gal). Also efficiently converts 2-deoxy-D-Gal to 2-deoxy-D-al-1-phosphate. The protein is Galactokinase (GAL1) of Arabidopsis thaliana (Mouse-ear cress).